The sequence spans 930 residues: Translation initiation factor IF-2 (930 aa).

The span at 50–67 shows a compositional bias: low complexity; it reads FKPAAAPKVEAKPAAPKV. Disordered regions lie at residues 50 to 217 and 260 to 346; these read FKPA…SSEE and EVVP…HELP. Composition is skewed to basic and acidic residues over residues 68–90 and 110–125; these read SAEK…EAKP and FKAE…AERR. Over residues 129–141 the composition is skewed to low complexity; sequence KGNNRDQQQNGNR. Composition is skewed to basic and acidic residues over residues 157–167 and 262–295; these read RDNRRFNDQAK and VPEK…DGPR. Positions 309-318 are enriched in low complexity; sequence NQKNSNWNNN. Residues 337–346 show a composition bias toward basic and acidic residues; sequence VTERKFHELP. Residues 432-599 enclose the tr-type G domain; the sequence is ERPPVVTIMG…TVLLVAEIQE (168 aa). The G1 stretch occupies residues 441–448; the sequence is GHVDHGKT. GTP is bound at residue 441–448; sequence GHVDHGKT. The tract at residues 466 to 470 is G2; sequence GITQH. Residues 487–490 are G3; the sequence is DTPG. GTP contacts are provided by residues 487–491 and 541–544; these read DTPGH and NKID. The tract at residues 541–544 is G4; that stretch reads NKID. Residues 577-579 are G5; sequence SAK.

This sequence belongs to the TRAFAC class translation factor GTPase superfamily. Classic translation factor GTPase family. IF-2 subfamily.

The protein resides in the cytoplasm. In terms of biological role, one of the essential components for the initiation of protein synthesis. Protects formylmethionyl-tRNA from spontaneous hydrolysis and promotes its binding to the 30S ribosomal subunits. Also involved in the hydrolysis of GTP during the formation of the 70S ribosomal complex. This Streptococcus pneumoniae (strain Taiwan19F-14) protein is Translation initiation factor IF-2.